A 411-amino-acid chain; its full sequence is 3-phosphoshikimate 1-carboxyvinyltransferase (411 aa).

3-phosphoshikimate is bound by residues K20, S21, and R25. Phosphoenolpyruvate is bound at residue K20. Residues G86 and R114 each coordinate phosphoenolpyruvate. Residues S156, S157, Q158, S181, D295, and K322 each coordinate 3-phosphoshikimate. Q158 contacts phosphoenolpyruvate. D295 serves as the catalytic Proton acceptor. R326, R367, and K393 together coordinate phosphoenolpyruvate.

Belongs to the EPSP synthase family. In terms of assembly, monomer.

It is found in the cytoplasm. The enzyme catalyses 3-phosphoshikimate + phosphoenolpyruvate = 5-O-(1-carboxyvinyl)-3-phosphoshikimate + phosphate. The protein operates within metabolic intermediate biosynthesis; chorismate biosynthesis. In terms of biological role, catalyzes the transfer of the enolpyruvyl moiety of phosphoenolpyruvate (PEP) to the 5-hydroxyl of shikimate-3-phosphate (S3P) to produce enolpyruvyl shikimate-3-phosphate and inorganic phosphate. The polypeptide is 3-phosphoshikimate 1-carboxyvinyltransferase (Picrophilus torridus (strain ATCC 700027 / DSM 9790 / JCM 10055 / NBRC 100828 / KAW 2/3)).